The primary structure comprises 143 residues: Hemoglobin subunit alpha-A (143 aa).

A Globin domain is found at 2-143; that stretch reads SLSGKDKSVV…LALALAERYR (142 aa). Histidine 60 contributes to the O2 binding site. Residue histidine 89 coordinates heme b.

The protein belongs to the globin family. As to quaternary structure, heterotetramer of two alpha chains and two beta chains. Red blood cells.

Involved in oxygen transport from gills to the various peripheral tissues. The polypeptide is Hemoglobin subunit alpha-A (hbaa) (Seriola quinqueradiata (Five-ray yellowtail)).